The following is a 317-amino-acid chain: Retinol dehydrogenase 16 (317 aa).

NAD(+) is bound at residue 33-57; it reads FITGCDSGFGTLLARQLDRRGMRVL. Y176 (proton acceptor) is an active-site residue. The helical transmembrane segment at 289–309 threads the bilayer; that stretch reads LFYLPLSYLPTFLVDALLYWT.

It belongs to the short-chain dehydrogenases/reductases (SDR) family. As to quaternary structure, homodimer. Post-translationally, not glycosylated.

The protein localises to the endoplasmic reticulum membrane. The protein resides in the microsome membrane. It catalyses the reaction all-trans-retinol--[retinol-binding protein] + NAD(+) = all-trans-retinal--[retinol-binding protein] + NADH + H(+). The enzyme catalyses 9-cis-retinol + NAD(+) = 9-cis-retinal + NADH + H(+). It carries out the reaction 11-cis-retinol + NAD(+) = 11-cis-retinal + NADH + H(+). The catalysed reaction is 13-cis-retinol + NAD(+) = 13-cis-retinal + NADH + H(+). It catalyses the reaction androsterone + NAD(+) = 5alpha-androstan-3,17-dione + NADH + H(+). The enzyme catalyses 5alpha-androstane-3alpha,17beta-diol + NAD(+) = 17beta-hydroxy-5alpha-androstan-3-one + NADH + H(+). It functions in the pathway cofactor metabolism; retinol metabolism. Functionally, oxidoreductase with a preference for NAD. Oxidizes all-trans-retinol, 9-cis-retinol, 11-cis-retinol and 13-cis-retinol to the corresponding aldehydes. Has higher activity towards CRBP-bound retinol than with free retinol. Oxidizes 3-alpha-hydroxysteroids. Oxidizes androstanediol and androsterone to dihydrotestosterone and androstanedione. Can also catalyze the reverse reaction. This is Retinol dehydrogenase 16 from Mus musculus (Mouse).